The chain runs to 243 residues: Ornithine decarboxylase antizyme 3 (243 aa).

Phosphoserine occurs at positions 6, 9, and 12.

It belongs to the ODC antizyme family. Interacts with ODC1 and thereby sterically blocks ODC homodimerization. Interacts with AZIN2; this interaction disrupts the interaction between the antizyme and ODC1. Interacts with GGN. In terms of tissue distribution, testis specific. Expressed throughout the differentiation process from spermatids to spermatozoa in the inner part of the seminiferous tubules.

The protein localises to the nucleus. It is found in the cytoplasm. Its function is as follows. Ornithine decarboxylase (ODC) antizyme protein that negatively regulates ODC activity and intracellular polyamine biosynthesis and uptake in response to increased intracellular polyamine levels. Binds to ODC monomers, inhibiting the assembly of the functional ODC homodimers. Does not target the ODC monomers for degradation, which allows a protein synthesis-independent restoration of ODC activity. Stabilizes AZIN2 by interfering with its ubiquitination. Involved in the translocation of AZNI2 from ER-Golgi intermediate compartment (ERGIC) to the cytosol. Probably plays a key role in spermatogenesis by regulating the intracellular concentration of polyamines in haploid germ cells. The polypeptide is Ornithine decarboxylase antizyme 3 (Oaz3) (Mus musculus (Mouse)).